A 189-amino-acid chain; its full sequence is GTP cyclohydrolase 1 (189 aa).

Residues C78, H81, and C150 each coordinate Zn(2+).

This sequence belongs to the GTP cyclohydrolase I family. Toroid-shaped homodecamer, composed of two pentamers of five dimers.

The enzyme catalyses GTP + H2O = 7,8-dihydroneopterin 3'-triphosphate + formate + H(+). Its pathway is cofactor biosynthesis; 7,8-dihydroneopterin triphosphate biosynthesis; 7,8-dihydroneopterin triphosphate from GTP: step 1/1. The polypeptide is GTP cyclohydrolase 1 (Bacillus pumilus (strain SAFR-032)).